Consider the following 386-residue polypeptide: Probable family 17 glucosidase SCW4 (386 aa).

The N-terminal stretch at 1 to 19 (MRLSNLIASASLLSAATLA) is a signal peptide. Residues 20-30 (APANHEHKDKR) constitute a propeptide that is removed on maturation. A disordered region spans residues 88–127 (ENNSQVSAAASPASSSAATSTQSSSSSQASSSSSSGEDVS). N89 is a glycosylation site (N-linked (GlcNAc...) asparagine). E323 acts as the Nucleophile in catalysis.

It belongs to the glycosyl hydrolase 17 family. N-glycosylated.

Its subcellular location is the secreted. It localises to the cell wall. In terms of biological role, glucanases possibly play a role in cell expansion during growth, in cell-cell fusion during mating, and in spore release during sporulation. The polypeptide is Probable family 17 glucosidase SCW4 (SCW4) (Saccharomyces cerevisiae (strain ATCC 204508 / S288c) (Baker's yeast)).